A 336-amino-acid chain; its full sequence is Fructose-1,6-bisphosphatase class 1 (336 aa).

Residues Glu-90, Asp-112, Leu-114, and Asp-115 each contribute to the Mg(2+) site. Residues 115-118, Asn-207, and Lys-273 each bind substrate; that span reads DGSS. Glu-279 provides a ligand contact to Mg(2+).

Belongs to the FBPase class 1 family. As to quaternary structure, homotetramer. Mg(2+) is required as a cofactor.

It localises to the cytoplasm. It carries out the reaction beta-D-fructose 1,6-bisphosphate + H2O = beta-D-fructose 6-phosphate + phosphate. Its pathway is carbohydrate biosynthesis; gluconeogenesis. This chain is Fructose-1,6-bisphosphatase class 1, found in Xanthomonas euvesicatoria pv. vesicatoria (strain 85-10) (Xanthomonas campestris pv. vesicatoria).